The following is a 350-amino-acid chain: Histidinol-phosphate aminotransferase (350 aa).

Residue Lys-210 is modified to N6-(pyridoxal phosphate)lysine.

The protein belongs to the class-II pyridoxal-phosphate-dependent aminotransferase family. Histidinol-phosphate aminotransferase subfamily. As to quaternary structure, homodimer. It depends on pyridoxal 5'-phosphate as a cofactor.

The catalysed reaction is L-histidinol phosphate + 2-oxoglutarate = 3-(imidazol-4-yl)-2-oxopropyl phosphate + L-glutamate. It participates in amino-acid biosynthesis; L-histidine biosynthesis; L-histidine from 5-phospho-alpha-D-ribose 1-diphosphate: step 7/9. This chain is Histidinol-phosphate aminotransferase, found in Pseudomonas syringae pv. syringae (strain B728a).